Consider the following 57-residue polypeptide: Probable antitoxin MazE1 (57 aa).

Forms a complex with cognate toxin MazF1.

Its function is as follows. Antitoxin component of a type II toxin-antitoxin (TA) system. The chain is Probable antitoxin MazE1 (mazE1) from Mycobacterium tuberculosis (strain ATCC 25618 / H37Rv).